The sequence spans 130 residues: Phosphomevalonate dehydratase small subunit (130 aa).

S62 functions as the Proton acceptor in the catalytic mechanism.

It belongs to the AcnX type II small subunit family. Heterodimer composed of a large subunit (PMDh-L) and a small subunit (PMDh-S).

It catalyses the reaction (R)-5-phosphomevalonate = (2E)-3-methyl-5-phosphooxypent-2-enoate + H2O. It participates in isoprenoid biosynthesis; isopentenyl diphosphate biosynthesis via mevalonate pathway. Its function is as follows. Component of a hydro-lyase that catalyzes the dehydration of mevalonate 5-phosphate (MVA5P) to form trans-anhydromevalonate 5-phosphate (tAHMP). Involved in the archaeal mevalonate (MVA) pathway, which provides fundamental precursors for isoprenoid biosynthesis, such as isopentenyl diphosphate (IPP) and dimethylallyl diphosphate (DMAPP). The polypeptide is Phosphomevalonate dehydratase small subunit (Thermococcus onnurineus (strain NA1)).